Consider the following 395-residue polypeptide: Protein phosphatase PP2A regulatory subunit A (395 aa).

HEAT repeat units lie at residues 44–81, 83–120, 122–159, 161–198, 200–237, 239–276, 279–316, and 318–355; these read DCLA…AVGP, STKT…ILSP, LAIQ…VLGK, ATIE…VIGI, LLSQ…QLGV, FFDD…EEFG, WAMQ…VLGS, and ITST…IVDE.

This sequence belongs to the phosphatase 2A regulatory subunit A family. In terms of assembly, PP2A exists in several trimeric forms, all of which consist of a core composed of a catalytic subunit associated with a 65 kDa regulatory subunit (PR65) (subunit A). The core complex associates with a third, variable subunit (subunit B), which confers distinct properties to the holoenzyme.

Its function is as follows. The PR65 subunit of protein phosphatase 2A serves as a scaffolding molecule to coordinate the assembly of the catalytic subunit and a variable regulatory B subunit. This is Protein phosphatase PP2A regulatory subunit A from Pisum sativum (Garden pea).